The primary structure comprises 492 residues: GTPase Der (492 aa).

EngA-type G domains lie at 3-167 (PVVA…PAPE) and 188-363 (ICIA…AQYA). GTP is bound by residues 9–16 (GRPNVGKS), 56–60 (DTGGF), 119–122 (NKVE), 194–201 (GRPNVGKS), 241–245 (DTAGI), and 306–309 (NKWD). The 85-residue stretch at 364–448 (YRINTGLLNR…PIRLLFRAKT (85 aa)) folds into the KH-like domain. A disordered region spans residues 464–492 (VEKKEKKTTRRKKERKEQSRRKRVRDLKG). The span at 469 to 492 (KKTTRRKKERKEQSRRKRVRDLKG) shows a compositional bias: basic residues.

The protein belongs to the TRAFAC class TrmE-Era-EngA-EngB-Septin-like GTPase superfamily. EngA (Der) GTPase family. Associates with the 50S ribosomal subunit.

GTPase that plays an essential role in the late steps of ribosome biogenesis. This is GTPase Der from Desulforapulum autotrophicum (strain ATCC 43914 / DSM 3382 / VKM B-1955 / HRM2) (Desulfobacterium autotrophicum).